The primary structure comprises 274 residues: Acetyl-coenzyme A carboxylase carboxyl transferase subunit beta (274 aa).

One can recognise a CoA carboxyltransferase N-terminal domain in the interval 16 to 274; the sequence is LWTKCEECKN…LLNLLFYKNA (259 aa). 4 residues coordinate Zn(2+): Cys-20, Cys-23, Cys-39, and Cys-42. The segment at 20–42 adopts a C4-type zinc-finger fold; sequence CEECKNILLAQELETNFYVCPKC.

The protein belongs to the AccD/PCCB family. Acetyl-CoA carboxylase is a heterohexamer composed of biotin carboxyl carrier protein (AccB), biotin carboxylase (AccC) and two subunits each of ACCase subunit alpha (AccA) and ACCase subunit beta (AccD). It depends on Zn(2+) as a cofactor.

The protein resides in the cytoplasm. The enzyme catalyses N(6)-carboxybiotinyl-L-lysyl-[protein] + acetyl-CoA = N(6)-biotinyl-L-lysyl-[protein] + malonyl-CoA. It participates in lipid metabolism; malonyl-CoA biosynthesis; malonyl-CoA from acetyl-CoA: step 1/1. In terms of biological role, component of the acetyl coenzyme A carboxylase (ACC) complex. Biotin carboxylase (BC) catalyzes the carboxylation of biotin on its carrier protein (BCCP) and then the CO(2) group is transferred by the transcarboxylase to acetyl-CoA to form malonyl-CoA. In Hydrogenobaculum sp. (strain Y04AAS1), this protein is Acetyl-coenzyme A carboxylase carboxyl transferase subunit beta.